Here is a 1546-residue protein sequence, read N- to C-terminus: Lysophospholipase NTE1 (1546 aa).

Residues 1 to 45 lie on the Cytoplasmic side of the membrane; the sequence is MKDSTEALNSIAFAVDTTLSSILPSSLAPPSAPPATSSFLKSIWY. A helical transmembrane segment spans residues 46-66; the sequence is AFWWLWSMVVFKIMNIILLYI. At 67–81 the chain is on the lumenal side; it reads PSKIMNALSINFEIT. A helical transmembrane segment spans residues 82-102; sequence LNLSSILVALSAIITVCFLVV. Residues 103–1546 lie on the Cytoplasmic side of the membrane; the sequence is RYKYLTGYSK…KKVLYRRNSI (1444 aa). A nucleoside 3',5'-cyclic phosphate-binding positions include 689-820 and 816-965; these read PTEF…LKKL and KLKK…VASK. The 165-residue stretch at 1239–1403 folds into the PNPLA domain; the sequence is LVLGGGGSRG…LDNLPVSEMK (165 aa). The GXGXXG motif lies at 1243–1248; the sequence is GGGSRG. The GXSXG signature appears at 1270–1274; that stretch reads GTSIG. Catalysis depends on Ser-1272, which acts as the Nucleophile. Asp-1390 serves as the catalytic Proton acceptor. The DGA/G signature appears at 1390–1392; the sequence is DGG.

Belongs to the NTE family.

The protein localises to the endoplasmic reticulum membrane. The enzyme catalyses a 1-acyl-sn-glycero-3-phosphocholine + H2O = sn-glycerol 3-phosphocholine + a fatty acid + H(+). Its activity is regulated as follows. Inhibited by organophosphorus esters. Its function is as follows. Intracellular phospholipase B that catalyzes the double deacylation of phosphatidylcholine (PC) to glycerophosphocholine (GroPCho). Plays an important role in membrane lipid homeostasis. Responsible for the rapid PC turnover in response to inositol, elevated temperatures, or when choline is present in the growth medium. This Scheffersomyces stipitis (strain ATCC 58785 / CBS 6054 / NBRC 10063 / NRRL Y-11545) (Yeast) protein is Lysophospholipase NTE1 (NTE1).